The following is a 432-amino-acid chain: Trigger factor (432 aa).

Residues 161-246 form the PPIase FKBP-type domain; sequence EDRVVIDFVG…LKKVEVMVLP (86 aa).

It belongs to the FKBP-type PPIase family. Tig subfamily.

Its subcellular location is the cytoplasm. The enzyme catalyses [protein]-peptidylproline (omega=180) = [protein]-peptidylproline (omega=0). In terms of biological role, involved in protein export. Acts as a chaperone by maintaining the newly synthesized protein in an open conformation. Functions as a peptidyl-prolyl cis-trans isomerase. In Pasteurella multocida (strain Pm70), this protein is Trigger factor (tig).